We begin with the raw amino-acid sequence, 527 residues long: T-complex protein 1 subunit beta (527 aa).

Ser-2 is subject to N-acetylserine.

This sequence belongs to the TCP-1 chaperonin family. As to quaternary structure, heterooligomeric complex of about 850 to 900 kDa that forms two stacked rings, 12 to 16 nm in diameter. Interacts with PLP2; this interaction leads to inhibition of CCT complex mediated actin folding.

Its subcellular location is the cytoplasm. In terms of biological role, molecular chaperone; assists the folding of proteins upon ATP hydrolysis. Known to play a role, in vitro, in the folding of actin and tubulin. In yeast may play a role in mitotic spindle formation. This Saccharomyces cerevisiae (strain ATCC 204508 / S288c) (Baker's yeast) protein is T-complex protein 1 subunit beta (CCT2).